The primary structure comprises 437 residues: GTPase Der (437 aa).

EngA-type G domains are found at residues 3–167 (ALVA…PAEN) and 177–353 (PRIA…AHRS). GTP is bound by residues 9-16 (GRPNVGKS), 56-60 (DTGGW), 119-122 (NKVD), 183-190 (GRPNAGKS), 230-234 (DTAGI), and 295-298 (NKWD). The KH-like domain occupies 354–437 (TRIPTHKLNE…TPINIFIREK (84 aa)).

This sequence belongs to the TRAFAC class TrmE-Era-EngA-EngB-Septin-like GTPase superfamily. EngA (Der) GTPase family. As to quaternary structure, associates with the 50S ribosomal subunit.

In terms of biological role, GTPase that plays an essential role in the late steps of ribosome biogenesis. This is GTPase Der from Porphyromonas gingivalis (strain ATCC BAA-308 / W83).